A 207-amino-acid chain; its full sequence is Superoxide dismutase [Mn] (207 aa).

Residues H27, H82, D169, and H173 each coordinate Mn(2+).

Belongs to the iron/manganese superoxide dismutase family. Mn(2+) is required as a cofactor.

The enzyme catalyses 2 superoxide + 2 H(+) = H2O2 + O2. Its function is as follows. Destroys superoxide anion radicals which are normally produced within the cells and which are toxic to biological systems. This Yersinia enterocolitica protein is Superoxide dismutase [Mn] (sodA).